Reading from the N-terminus, the 219-residue chain is MKSVTRCIALLGGSFDPVHNGHVALADYFVALLKPDELRVIPAGNPWQKHGLQASGQDRMAMVRSAFSTQKVTVNIDQQEILRPSATYTIDTLRAIRQELGPHASIVFLMGADQLQHLNTWQEWQHMFDYAHICAASRPGFAMDAAHIPTEVAQEFTRRTGTPEQIRTTPQGLAYLAPNLAVDISATAIRAALQRGERPTSQLPLGVLDYIEQHHLYKS.

Belongs to the NadD family.

It catalyses the reaction nicotinate beta-D-ribonucleotide + ATP + H(+) = deamido-NAD(+) + diphosphate. The protein operates within cofactor biosynthesis; NAD(+) biosynthesis; deamido-NAD(+) from nicotinate D-ribonucleotide: step 1/1. Catalyzes the reversible adenylation of nicotinate mononucleotide (NaMN) to nicotinic acid adenine dinucleotide (NaAD). The polypeptide is Probable nicotinate-nucleotide adenylyltransferase (Herminiimonas arsenicoxydans).